The chain runs to 164 residues: uncharacterized protein (164 aa).

Residues tyrosine 26–histidine 158 enclose the RDD domain. 2 consecutive transmembrane segments (helical) span residues alanine 35–phenylalanine 55 and methionine 66–leucine 86.

The protein resides in the cell membrane. This is an uncharacterized protein from Bacillus subtilis (strain 168).